Reading from the N-terminus, the 197-residue chain is Putative manganese efflux pump MntP (197 aa).

6 helical membrane passes run 8–28 (VILL…GLGA), 43–63 (VYAA…GYLL), 66–86 (VLLG…LIVL), 123–143 (LAIA…LLAL), 146–166 (WLAC…GIYL), and 177–197 (KAEI…MLFS).

The protein belongs to the MntP (TC 9.B.29) family.

It is found in the cell inner membrane. Functionally, probably functions as a manganese efflux pump. This Psychrobacter arcticus (strain DSM 17307 / VKM B-2377 / 273-4) protein is Putative manganese efflux pump MntP.